A 130-amino-acid chain; its full sequence is Large ribosomal subunit protein bL19 (130 aa).

This sequence belongs to the bacterial ribosomal protein bL19 family.

In terms of biological role, this protein is located at the 30S-50S ribosomal subunit interface and may play a role in the structure and function of the aminoacyl-tRNA binding site. In Mycoplasma capricolum subsp. capricolum (strain California kid / ATCC 27343 / NCTC 10154), this protein is Large ribosomal subunit protein bL19.